Consider the following 464-residue polypeptide: Soluble pyridine nucleotide transhydrogenase (464 aa).

Position 35-44 (35-44 (EASSQVGGSC)) interacts with FAD.

Belongs to the class-I pyridine nucleotide-disulfide oxidoreductase family. Requires FAD as cofactor.

It is found in the cytoplasm. It catalyses the reaction NAD(+) + NADPH = NADH + NADP(+). In terms of biological role, conversion of NADPH, generated by peripheral catabolic pathways, to NADH, which can enter the respiratory chain for energy generation. The polypeptide is Soluble pyridine nucleotide transhydrogenase (Marinomonas sp. (strain MWYL1)).